Reading from the N-terminus, the 289-residue chain is Probable WRKY transcription factor 38 (289 aa).

A disordered region spans residues 62 to 103 (PETEDDQFSDLSSRDSSPPPQGSPSKKRKIDSTNSSENWRDD). A DNA-binding region (WRKY) is located at residues 104–172 (SPDPIYYDGY…YFGHHTCKTE (69 aa)). The span at 249-266 (LSSPSGSYPPSSSSGSES) shows a compositional bias: low complexity. A disordered region spans residues 249 to 278 (LSSPSGSYPPSSSSGSESADFNSDLLFDNP).

The protein belongs to the WRKY group III family.

The protein resides in the nucleus. Functionally, transcription factor. Interacts specifically with the W box (5'-(T)TGAC[CT]-3'), a frequently occurring elicitor-responsive cis-acting element. The sequence is that of Probable WRKY transcription factor 38 (WRKY38) from Arabidopsis thaliana (Mouse-ear cress).